The sequence spans 634 residues: 1-deoxy-D-xylulose-5-phosphate synthase (634 aa).

Residues histidine 73 and 114–116 (GHS) each bind thiamine diphosphate. Mg(2+) is bound at residue aspartate 145. Residues 146 to 147 (GS), asparagine 174, phenylalanine 285, and glutamate 367 each bind thiamine diphosphate. Mg(2+) is bound at residue asparagine 174.

It belongs to the transketolase family. DXPS subfamily. Homodimer. It depends on Mg(2+) as a cofactor. Thiamine diphosphate is required as a cofactor.

The catalysed reaction is D-glyceraldehyde 3-phosphate + pyruvate + H(+) = 1-deoxy-D-xylulose 5-phosphate + CO2. Its pathway is metabolic intermediate biosynthesis; 1-deoxy-D-xylulose 5-phosphate biosynthesis; 1-deoxy-D-xylulose 5-phosphate from D-glyceraldehyde 3-phosphate and pyruvate: step 1/1. Catalyzes the acyloin condensation reaction between C atoms 2 and 3 of pyruvate and glyceraldehyde 3-phosphate to yield 1-deoxy-D-xylulose-5-phosphate (DXP). In Syntrophotalea carbinolica (strain DSM 2380 / NBRC 103641 / GraBd1) (Pelobacter carbinolicus), this protein is 1-deoxy-D-xylulose-5-phosphate synthase.